The chain runs to 289 residues: MWRRCLRLRDVGRRLLNLPRSGLTASEGLGPKLPTPIRAYVPPAERKRFYQNVSISQGEGGFEINLDHRKLRTPQGKLFTVPSEALAIAVATEWDSQQDTIKMYTMHLTTLCNTSLDNPTQRDKDQLIRAAVKFLDTDTVCYRVEEPETLVELQRNEWDPVISWAEKRYGVEIGSSTSITGPSIPARTREVLVSHLASYNMWALQGIEFVVTQLKSLVLTLGLTDLRLTVEQAVLLSRLEEEYQIQKWGNIEWAHDYELQELRARTAAGTLFVHLCSESTAVKHKLLQG.

The N-terminal 40 residues, 1–40, are a transit peptide targeting the mitochondrion; the sequence is MWRRCLRLRDVGRRLLNLPRSGLTASEGLGPKLPTPIRAY. Lys-133 carries the N6-succinyllysine modification.

The protein belongs to the ATP12 family. As to quaternary structure, interacts with ATP5F1B; involved in the assembly of the F1 component of the mitochondrial ATP synthase (ATPase). Interacts with FMC1.

It localises to the mitochondrion inner membrane. Functionally, plays a role in the assembly of the F1 component of the mitochondrial ATP synthase (ATPase). The protein is ATP synthase mitochondrial F1 complex assembly factor 2 (ATPAF2) of Bos taurus (Bovine).